The sequence spans 190 residues: Inner membrane-spanning protein YciB (190 aa).

6 helical membrane-spanning segments follow: residues 3 to 23 (FLFD…AGIY), 24 to 44 (VATT…WFKH), 49 to 69 (AMQW…LIFH), 76 to 96 (WKPT…VVVV), 121 to 141 (LVWA…AYNF), and 149 to 169 (FKLF…SVWL).

This sequence belongs to the YciB family.

It is found in the cell inner membrane. In terms of biological role, plays a role in cell envelope biogenesis, maintenance of cell envelope integrity and membrane homeostasis. In Ralstonia pickettii (strain 12J), this protein is Inner membrane-spanning protein YciB.